We begin with the raw amino-acid sequence, 197 residues long: Imidazoleglycerol-phosphate dehydratase (197 aa).

Belongs to the imidazoleglycerol-phosphate dehydratase family.

The protein localises to the cytoplasm. The enzyme catalyses D-erythro-1-(imidazol-4-yl)glycerol 3-phosphate = 3-(imidazol-4-yl)-2-oxopropyl phosphate + H2O. It participates in amino-acid biosynthesis; L-histidine biosynthesis; L-histidine from 5-phospho-alpha-D-ribose 1-diphosphate: step 6/9. The sequence is that of Imidazoleglycerol-phosphate dehydratase from Pseudomonas fluorescens (strain Pf0-1).